The following is a 1412-amino-acid chain: DNA-directed RNA polymerase subunit beta' (1412 aa).

The Mg(2+) site is built by aspartate 543, aspartate 545, and aspartate 547. Zn(2+)-binding residues include cysteine 1017, cysteine 1092, cysteine 1099, and cysteine 1102.

Belongs to the RNA polymerase beta' chain family. In terms of assembly, the RNAP catalytic core consists of 2 alpha, 1 beta, 1 beta' and 1 omega subunit. When a sigma factor is associated with the core the holoenzyme is formed, which can initiate transcription. Requires Mg(2+) as cofactor. It depends on Zn(2+) as a cofactor.

It carries out the reaction RNA(n) + a ribonucleoside 5'-triphosphate = RNA(n+1) + diphosphate. Functionally, DNA-dependent RNA polymerase catalyzes the transcription of DNA into RNA using the four ribonucleoside triphosphates as substrates. The polypeptide is DNA-directed RNA polymerase subunit beta' (Mesomycoplasma hyopneumoniae (strain J / ATCC 25934 / NCTC 10110) (Mycoplasma hyopneumoniae)).